We begin with the raw amino-acid sequence, 151 residues long: Large ribosomal subunit protein uL13 (151 aa).

It belongs to the universal ribosomal protein uL13 family. In terms of assembly, part of the 50S ribosomal subunit.

Functionally, this protein is one of the early assembly proteins of the 50S ribosomal subunit, although it is not seen to bind rRNA by itself. It is important during the early stages of 50S assembly. This Acaryochloris marina (strain MBIC 11017) protein is Large ribosomal subunit protein uL13.